Reading from the N-terminus, the 322-residue chain is TATA box-binding protein-like 2 (322 aa).

Residues Pro-31–Ala-54 form a disordered region. Residues Ala-32–Leu-42 are compositionally biased toward polar residues.

Belongs to the TBP family.

The protein localises to the nucleus. Its function is as follows. TATA box-binding transcription factor. Members of the TBP family are differentially required to regulate transcription and development during early embryogenesis. This chain is TATA box-binding protein-like 2, found in Takifugu rubripes (Japanese pufferfish).